The chain runs to 361 residues: Probable purine permease 5 (361 aa).

The next 9 membrane-spanning stretches (helical) occupy residues 37–57, 70–90, 105–125, 134–154, 158–178, 193–213, 235–255, 285–305, and 315–335; these read WILL…SSLL, WIIS…LLPT, LVLS…MYAY, TSSL…YLIV, LNAS…IIAL, YFAG…IFAL, VMVS…SNDF, LGVL…AGVL, and VAAV…SLVL. In terms of domain architecture, EamA spans 75–178; sequence VAVAGWPITC…ITGAMAIIAL (104 aa).

The protein belongs to the purine permeases (TC 2.A.7.14) family.

It is found in the membrane. The polypeptide is Probable purine permease 5 (PUP5) (Arabidopsis thaliana (Mouse-ear cress)).